Reading from the N-terminus, the 476-residue chain is Bifunctional protein HldE (476 aa).

Positions 1-318 (MKPILPDYNN…AEAIHGSRDT (318 aa)) are ribokinase. An ATP-binding site is contributed by 195–198 (NMSE). The active site involves Asp264. The segment at 344-476 (MTNGCFDILH…IIDAIKGGRG (133 aa)) is cytidylyltransferase.

In the N-terminal section; belongs to the carbohydrate kinase PfkB family. The protein in the C-terminal section; belongs to the cytidylyltransferase family. In terms of assembly, homodimer.

The enzyme catalyses D-glycero-beta-D-manno-heptose 7-phosphate + ATP = D-glycero-beta-D-manno-heptose 1,7-bisphosphate + ADP + H(+). It carries out the reaction D-glycero-beta-D-manno-heptose 1-phosphate + ATP + H(+) = ADP-D-glycero-beta-D-manno-heptose + diphosphate. The protein operates within nucleotide-sugar biosynthesis; ADP-L-glycero-beta-D-manno-heptose biosynthesis; ADP-L-glycero-beta-D-manno-heptose from D-glycero-beta-D-manno-heptose 7-phosphate: step 1/4. It participates in nucleotide-sugar biosynthesis; ADP-L-glycero-beta-D-manno-heptose biosynthesis; ADP-L-glycero-beta-D-manno-heptose from D-glycero-beta-D-manno-heptose 7-phosphate: step 3/4. Its pathway is bacterial outer membrane biogenesis; LPS core biosynthesis. Its function is as follows. Catalyzes the phosphorylation of D-glycero-D-manno-heptose 7-phosphate at the C-1 position to selectively form D-glycero-beta-D-manno-heptose-1,7-bisphosphate. Catalyzes the ADP transfer from ATP to D-glycero-beta-D-manno-heptose 1-phosphate, yielding ADP-D-glycero-beta-D-manno-heptose. The protein is Bifunctional protein HldE of Vibrio vulnificus (strain YJ016).